We begin with the raw amino-acid sequence, 527 residues long: Probable serine/threonine-protein kinase DDB_G0271538 (527 aa).

Residues Met-1–Ile-10 are compositionally biased toward basic and acidic residues. The interval Met-1–Asp-24 is disordered. Residues Leu-33 to Leu-294 form the Protein kinase domain. ATP is bound by residues Ile-39–Val-47 and Lys-60. Asp-156 acts as the Proton acceptor in catalysis. 3 disordered regions span residues Val-304–Ser-375, Phe-422–Pro-452, and Thr-485–Leu-527. Residues Asp-313–Asp-324 show a composition bias toward acidic residues. Over residues Asp-325–Asn-359 the composition is skewed to low complexity. The segment covering Val-440–Pro-452 has biased composition (acidic residues). A compositionally biased stretch (basic residues) spans Pro-512–Leu-527.

The protein belongs to the protein kinase superfamily. TKL Ser/Thr protein kinase family.

It carries out the reaction L-seryl-[protein] + ATP = O-phospho-L-seryl-[protein] + ADP + H(+). The enzyme catalyses L-threonyl-[protein] + ATP = O-phospho-L-threonyl-[protein] + ADP + H(+). In Dictyostelium discoideum (Social amoeba), this protein is Probable serine/threonine-protein kinase DDB_G0271538.